A 162-amino-acid polypeptide reads, in one-letter code: 2-C-methyl-D-erythritol 2,4-cyclodiphosphate synthase (162 aa).

A divalent metal cation-binding residues include D10 and H12. 4-CDP-2-C-methyl-D-erythritol 2-phosphate is bound by residues 10-12 and 36-37; these read DVH and HS. An a divalent metal cation-binding site is contributed by H44. 4-CDP-2-C-methyl-D-erythritol 2-phosphate contacts are provided by residues 58–60, 63–67, and R144; these read DIG and FSDTD.

This sequence belongs to the IspF family. As to quaternary structure, homotrimer. Requires a divalent metal cation as cofactor.

The catalysed reaction is 4-CDP-2-C-methyl-D-erythritol 2-phosphate = 2-C-methyl-D-erythritol 2,4-cyclic diphosphate + CMP. Its pathway is isoprenoid biosynthesis; isopentenyl diphosphate biosynthesis via DXP pathway; isopentenyl diphosphate from 1-deoxy-D-xylulose 5-phosphate: step 4/6. Functionally, involved in the biosynthesis of isopentenyl diphosphate (IPP) and dimethylallyl diphosphate (DMAPP), two major building blocks of isoprenoid compounds. Catalyzes the conversion of 4-diphosphocytidyl-2-C-methyl-D-erythritol 2-phosphate (CDP-ME2P) to 2-C-methyl-D-erythritol 2,4-cyclodiphosphate (ME-CPP) with a corresponding release of cytidine 5-monophosphate (CMP). This is 2-C-methyl-D-erythritol 2,4-cyclodiphosphate synthase from Burkholderia thailandensis (strain ATCC 700388 / DSM 13276 / CCUG 48851 / CIP 106301 / E264).